Consider the following 299-residue polypeptide: 4-hydroxy-tetrahydrodipicolinate synthase 2 (299 aa).

T54 contacts pyruvate. Residue Y142 is the Proton donor/acceptor of the active site. Catalysis depends on K170, which acts as the Schiff-base intermediate with substrate. V210 contributes to the pyruvate binding site.

This sequence belongs to the DapA family. As to quaternary structure, homotetramer; dimer of dimers.

Its subcellular location is the cytoplasm. It carries out the reaction L-aspartate 4-semialdehyde + pyruvate = (2S,4S)-4-hydroxy-2,3,4,5-tetrahydrodipicolinate + H2O + H(+). Its pathway is amino-acid biosynthesis; L-lysine biosynthesis via DAP pathway; (S)-tetrahydrodipicolinate from L-aspartate: step 3/4. Catalyzes the condensation of (S)-aspartate-beta-semialdehyde [(S)-ASA] and pyruvate to 4-hydroxy-tetrahydrodipicolinate (HTPA). The sequence is that of 4-hydroxy-tetrahydrodipicolinate synthase 2 from Streptomyces coelicolor (strain ATCC BAA-471 / A3(2) / M145).